We begin with the raw amino-acid sequence, 157 residues long: ATP synthase subunit b', chloroplastic (157 aa).

Residues 26–43 (LMASQFLLIMLILDITFY) traverse the membrane as a helical segment.

This sequence belongs to the ATPase B chain family. F-type ATPases have 2 components, F(1) - the catalytic core - and F(0) - the membrane proton channel. F(1) has five subunits: alpha(3), beta(3), gamma(1), delta(1), epsilon(1). F(0) has four main subunits: a(1), b(1), b'(1) and c(10-14). The alpha and beta chains form an alternating ring which encloses part of the gamma chain. F(1) is attached to F(0) by a central stalk formed by the gamma and epsilon chains, while a peripheral stalk is formed by the delta, b and b' chains.

It is found in the plastid. The protein localises to the chloroplast thylakoid membrane. Its function is as follows. F(1)F(0) ATP synthase produces ATP from ADP in the presence of a proton or sodium gradient. F-type ATPases consist of two structural domains, F(1) containing the extramembraneous catalytic core and F(0) containing the membrane proton channel, linked together by a central stalk and a peripheral stalk. During catalysis, ATP synthesis in the catalytic domain of F(1) is coupled via a rotary mechanism of the central stalk subunits to proton translocation. In terms of biological role, component of the F(0) channel, it forms part of the peripheral stalk, linking F(1) to F(0). The b'-subunit is a diverged and duplicated form of b found in plants and photosynthetic bacteria. In Cyanidium caldarium (Red alga), this protein is ATP synthase subunit b', chloroplastic.